Consider the following 1305-residue polypeptide: Adenylate cyclase type 9 (1305 aa).

Residues 1 to 110 (MASPVNQQLL…CFPQTQRRFR (110 aa)) are Cytoplasmic-facing. Positions 46 to 55 (ISSSCSSGES) are enriched in low complexity. Residues 46–71 (ISSSCSSGESGVKKTGGSGGARRQKK) are disordered. A helical membrane pass occupies residues 111-131 (YALMYLSVAGLLWSIYFSVHM). Topologically, residues 132–134 (KTK) are extracellular. The helical transmembrane segment at 135 to 155 (LVSHLVPTLCFLIVCLGFFFF) threads the bilayer. Residues 156–164 (TFTKSYARH) lie on the Cytoplasmic side of the membrane. The chain crosses the membrane as a helical span at residues 165–185 (CTAISLLVTLLVFTLTLASQF). Residues 186–209 (QVLNPGLGSDSLSNLTSFSATGSS) are Extracellular-facing. An N-linked (GlcNAc...) asparagine glycan is attached at N199. Residues 210–229 (SCLSQVGSFSICVEVLLLLY) traverse the membrane as a helical segment. Residues 230–235 (TVMHLP) are Cytoplasmic-facing. Residues 236–253 (LYLSACLGVAYSILFETF) form a helical membrane-spanning segment. The Extracellular segment spans residues 254-274 (GYHFRDESCFVLLVGRMAHWE). The chain crosses the membrane as a helical span at residues 275–295 (LLSKALLHVCIHAIGVHLFIM). Topologically, residues 296-778 (SEVRSRSTFL…VKTFASATFS (483 aa)) are cytoplasmic. A disordered region spans residues 343–369 (QGDDESENSVKRHSASSPKSRKKKSSI). Residues 353–368 (KRHSASSPKSRKKKSS) are compositionally biased toward basic residues. Mg(2+) contacts are provided by D393, I394, and D437. ATP is bound by residues 393–398 (DIVGFT), 435–437 (LGD), and R481. 2 stretches are compositionally biased toward polar residues: residues 607–618 (SDSHTNCTQPET) and 670–680 (ESSTGDTLTNS). The disordered stretch occupies residues 607 to 680 (SDSHTNCTQP…SSTGDTLTNS (74 aa)). The helical transmembrane segment at 779-799 (SLQDVLLNYFIFVLLSVACLL) threads the bilayer. Over 800 to 810 (KPGTNTVSPPT) the chain is Extracellular. A helical membrane pass occupies residues 811–831 (LALVLLSVCGLLGFLSLLVSV). Topologically, residues 832-859 (RMAFYLEDMLLCTRRLLEIISGWVPRHF) are cytoplasmic. The chain crosses the membrane as a helical span at residues 860-880 (IGTVLVCLPAAVIFSYLSSDF). The Extracellular segment spans residues 881–883 (YTD). Residues 884–904 (IHYTMFLCSALLIPMVQYCNF) traverse the membrane as a helical segment. The Cytoplasmic segment spans residues 905-911 (CQLSSSA). Residues 912–932 (LLLATITGATMLILIYLPLCP) traverse the membrane as a helical segment. Over 933–966 (QRPPLDPGTDIEANLSTSNSSYETLDNPRTELPF) the chain is Extracellular. 2 N-linked (GlcNAc...) asparagine glycosylation sites follow: N946 and N951. The helical transmembrane segment at 967–987 (TRLGQEIAVAYFLLLLLVWFL) threads the bilayer. Topologically, residues 988 to 1305 (NREFDVSYRL…EERGRDGGAR (318 aa)) are cytoplasmic. Residues K1099, 1176–1178 (DIW), 1183–1187 (NIASR), and K1223 each bind ATP. Residues 1261–1305 (SIGRSPTDEISSLVTGGKGAVELGSGEAERKREKAEERGRDGGAR) form a disordered region. The segment covering 1287–1305 (EAERKREKAEERGRDGGAR) has biased composition (basic and acidic residues).

Belongs to the adenylyl cyclase class-4/guanylyl cyclase family. Mg(2+) is required as a cofactor. Requires Mn(2+) as cofactor. As to expression, detected in oocytes.

It localises to the cell membrane. The enzyme catalyses ATP = 3',5'-cyclic AMP + diphosphate. Its function is as follows. Adenylyl cyclase that catalyzes the formation of the signaling molecule cAMP in response to activation of G protein-coupled receptors. This chain is Adenylate cyclase type 9 (adcy9), found in Xenopus laevis (African clawed frog).